Reading from the N-terminus, the 279-residue chain is Four and a half LIM domains protein 2 (279 aa).

Residues 7–31 form a C4-type zinc finger; that stretch reads CHHCNESLYGKKYILKEENPHCVAC. LIM zinc-binding domains follow at residues 40–92, 101–153, and 162–212; these read CEEC…CTDC, CQEC…CVPC, and CVQC…CLTC. Lys-78 is covalently cross-linked (Glycyl lysine isopeptide (Lys-Gly) (interchain with G-Cter in SUMO2)). Glycyl lysine isopeptide (Lys-Gly) (interchain with G-Cter in SUMO2) cross-links involve residues Lys-167 and Lys-220. Residues 221-275 form the LIM zinc-binding 4 domain; it reads CAGCTNPISGLGGTKYISFEERQWHNDCFNCKKCSLSLVGRGFLTERDDILCPDC. Ser-238 is modified (phosphoserine).

In terms of assembly, interacts with ZNF638 and TTN/titin. Interacts with E4F1. Interacts with GRB7. Interacts with SIRT1 and FOXO1. Interacts with CEFIP and calcineurin. Interacts with FOXK1. As to expression, expressed in heart only (at protein level).

It is found in the cytoplasm. The protein localises to the nucleus. The protein resides in the myofibril. Its subcellular location is the sarcomere. It localises to the z line. Its function is as follows. May function as a molecular transmitter linking various signaling pathways to transcriptional regulation. Negatively regulates the transcriptional repressor E4F1 and may function in cell growth. Inhibits the transcriptional activity of FOXO1 and its apoptotic function by enhancing the interaction of FOXO1 with SIRT1 and FOXO1 deacetylation. Negatively regulates the calcineurin/NFAT signaling pathway in cardiomyocytes. In Rattus norvegicus (Rat), this protein is Four and a half LIM domains protein 2 (Fhl2).